We begin with the raw amino-acid sequence, 638 residues long: Cytoplasmic dynein 1 intermediate chain 2 (638 aa).

Basic and acidic residues-rich tracts occupy residues 1 to 13 (MSDK…ELER) and 20 to 43 (QIRE…KKEA). Disordered regions lie at residues 1 to 135 (MSDK…GRGP) and 155 to 214 (TYTK…EEKQ). N-acetylserine is present on serine 2. Serine 51 carries the post-translational modification Diphosphoserine. Residues serine 51, serine 73, tryptophan 81, proline 84, and serine 90 each carry the phosphoserine modification. Residues 88–97 (PSSKSVSTPS) are compositionally biased toward low complexity. Threonine 95 carries the phosphothreonine modification. 3 positions are modified to phosphoserine: serine 97, serine 101, and serine 104. The segment covering 190-214 (EKTLKKDEENDSKAPPHELTEEEKQ) has biased composition (basic and acidic residues). 7 WD repeats span residues 277-326 (SKHR…TTPE), 330-370 (HCQS…RTPV), 379-420 (AHTH…HPQD), 429-469 (SKAV…AGIS), 474-519 (GHQG…PLYS), 522-562 (DNAD…EVPT), and 568-607 (EGNP…AVPR).

Belongs to the dynein intermediate chain family. As to quaternary structure, homodimer. The cytoplasmic dynein 1 complex consists of two catalytic heavy chains (HCs) and a number of non-catalytic subunits presented by intermediate chains (ICs), light intermediate chains (LICs) and light chains (LCs); the composition seems to vary in respect to the IC, LIC and LC composition. The heavy chain homodimer serves as a scaffold for the probable homodimeric assembly of the respective non-catalytic subunits. The ICs and LICs bind directly to the HC dimer and the LCs assemble on the IC dimer. Interacts with DYNLT3. Interacts with DYNLT1. Interacts (dephosphorylated at Ser-90) with DCTN1. Interacts with BICD2. Interacts with SPEF2. Interacts with CFAP61. In terms of assembly, (Microbial infection) Interacts with human adenovirus 5 hexon protein; this interaction probably allows virus intracellular transport. Post-translationally, the phosphorylation status of Ser-90 appears to be involved in dynactin-dependent target binding. Pyrophosphorylation by 5-diphosphoinositol pentakisphosphate (5-IP7) promotes interaction with DCTN1. Serine pyrophosphorylation is achieved by Mg(2+)-dependent, but enzyme independent transfer of a beta-phosphate from a inositol pyrophosphate to a pre-phosphorylated serine residue.

Its subcellular location is the cytoplasm. It localises to the cytoskeleton. Functionally, acts as one of several non-catalytic accessory components of the cytoplasmic dynein 1 complex that are thought to be involved in linking dynein to cargos and to adapter proteins that regulate dynein function. Cytoplasmic dynein 1 acts as a motor for the intracellular retrograde motility of vesicles and organelles along microtubules. The intermediate chains mediate the binding of dynein to dynactin via its 150 kDa component (p150-glued) DCTN1. Involved in membrane-transport, such as Golgi apparatus, late endosomes and lysosomes. This is Cytoplasmic dynein 1 intermediate chain 2 from Homo sapiens (Human).